The following is a 170-amino-acid chain: Small ribosomal subunit protein bS18c (170 aa).

Disordered stretches follow at residues 1 to 59 (MYIS…IGPG) and 151 to 170 (NLRN…SSDC). 7 repeats span residues 4–10 (SKQPFRK), 11–17 (SKQPFRK), 18–24 (SKQTFHK), 25–31 (SKQPFRK), 32–38 (FKQPFRK), 39–45 (SKQPFRK), and 46–52 (SKQPFRR). A 7 X 7 AA tandem repeats region spans residues 4-52 (SKQPFRKSKQPFRKSKQTFHKSKQPFRKFKQPFRKSKQPFRKSKQPFRR). Basic residues predominate over residues 7–55 (PFRKSKQPFRKSKQTFHKSKQPFRKFKQPFRKSKQPFRKSKQPFRRRSR).

This sequence belongs to the bacterial ribosomal protein bS18 family. Part of the 30S ribosomal subunit.

Its subcellular location is the plastid. The protein resides in the chloroplast. The protein is Small ribosomal subunit protein bS18c (rps18) of Zea mays (Maize).